The primary structure comprises 122 residues: Small ribosomal subunit protein uS13 (122 aa).

The interval 95 to 122 (GLPVRGQRTHTNARTRKGPAKPIAGKKK) is disordered.

It belongs to the universal ribosomal protein uS13 family. In terms of assembly, part of the 30S ribosomal subunit. Forms a loose heterodimer with protein S19. Forms two bridges to the 50S subunit in the 70S ribosome.

Its function is as follows. Located at the top of the head of the 30S subunit, it contacts several helices of the 16S rRNA. In the 70S ribosome it contacts the 23S rRNA (bridge B1a) and protein L5 of the 50S subunit (bridge B1b), connecting the 2 subunits; these bridges are implicated in subunit movement. Contacts the tRNAs in the A and P-sites. The polypeptide is Small ribosomal subunit protein uS13 (Caulobacter sp. (strain K31)).